An 822-amino-acid chain; its full sequence is Telomere length regulation protein TEL2 homolog (822 aa).

The disordered stretch occupies residues 442–504 (NDDEEEQPDA…ADQEKKKSAP (63 aa)). The segment covering 465 to 477 (VSSQSVASDPGNG) has biased composition (polar residues). The span at 480-489 (SELDSDDDLT) shows a compositional bias: acidic residues.

It belongs to the TEL2 family.

The protein localises to the cytoplasm. Its subcellular location is the membrane. It localises to the nucleus. Functionally, regulator of the DNA damage response (DDR). Part of the TTT complex that is required to stabilize protein levels of the phosphatidylinositol 3-kinase-related protein kinase (PIKK) family proteins. Promotes assembly, stabilizes and maintains the activity of TORC complexes, which regulate cell growth and survival in response to nutrient and hormonal signals. May be involved in telomere length regulation. The protein is Telomere length regulation protein TEL2 homolog (telo2) of Danio rerio (Zebrafish).